The following is a 95-amino-acid chain: Protein TusB (95 aa).

The protein belongs to the DsrH/TusB family. Heterohexamer, formed by a dimer of trimers. The hexameric TusBCD complex contains 2 copies each of TusB, TusC and TusD. The TusBCD complex interacts with TusE.

It is found in the cytoplasm. In terms of biological role, part of a sulfur-relay system required for 2-thiolation of 5-methylaminomethyl-2-thiouridine (mnm(5)s(2)U) at tRNA wobble positions. The sequence is that of Protein TusB from Escherichia coli O81 (strain ED1a).